The primary structure comprises 337 residues: D-alanine--D-alanine ligase (337 aa).

One can recognise an ATP-grasp domain in the interval K124 to N330. A154–E209 serves as a coordination point for ATP. Positions 284, 297, and 299 each coordinate Mg(2+).

Belongs to the D-alanine--D-alanine ligase family. It depends on Mg(2+) as a cofactor. Mn(2+) is required as a cofactor.

The protein resides in the cytoplasm. The enzyme catalyses 2 D-alanine + ATP = D-alanyl-D-alanine + ADP + phosphate + H(+). It functions in the pathway cell wall biogenesis; peptidoglycan biosynthesis. Its function is as follows. Cell wall formation. The sequence is that of D-alanine--D-alanine ligase from Shewanella putrefaciens (strain CN-32 / ATCC BAA-453).